Consider the following 158-residue polypeptide: Transcription elongation factor GreA (158 aa).

The stretch at 53 to 73 (EQQSFVEGRIQEIEGKLSNAQ) forms a coiled coil.

Belongs to the GreA/GreB family.

Necessary for efficient RNA polymerase transcription elongation past template-encoded arresting sites. The arresting sites in DNA have the property of trapping a certain fraction of elongating RNA polymerases that pass through, resulting in locked ternary complexes. Cleavage of the nascent transcript by cleavage factors such as GreA or GreB allows the resumption of elongation from the new 3'terminus. GreA releases sequences of 2 to 3 nucleotides. In Alkalilimnicola ehrlichii (strain ATCC BAA-1101 / DSM 17681 / MLHE-1), this protein is Transcription elongation factor GreA.